A 388-amino-acid polypeptide reads, in one-letter code: Quinolone resistance protein NorA (388 aa).

A run of 12 helical transmembrane segments spans residues 5-25, 42-62, 69-89, 99-119, 129-149, 157-177, 201-221, 239-259, 269-289, 293-313, 331-351, and 355-375; these read IFVL…VIPV, LLVA…GTLA, LIIC…AVGH, VIGG…IADI, FGYM…IGGF, MPFY…IVLI, WKVF…LSAF, DISI…IYFF, LTFI…LVFA, WSIM…RPAI, LNST…GALF, and IEAP…IVLI.

The protein belongs to the major facilitator superfamily. TCR/Tet family.

Its subcellular location is the cell membrane. Functionally, involved in quinolone resistance. May constitute a membrane-associated active efflux pump of hydrophilic quinolones. This Staphylococcus aureus (strain COL) protein is Quinolone resistance protein NorA (norA).